Here is a 62-residue protein sequence, read N- to C-terminus: Pro-MCH variant (62 aa).

Residues 23–41 (GSVAFPAENGVQDTESTQE) form an NGE-like region. The tract at residues 29–62 (AENGVQDTESTQEKRETGDEENSAKFPIGRRDFD) is disordered. The NEI-like stretch occupies residues 44 to 56 (ETGDEENSAKFPI). Positions 60 to 62 (DFD) are melanin-concentrating hormone-like.

The protein belongs to the melanin-concentrating hormone family.

The sequence is that of Pro-MCH variant (PMCHL1) from Pan paniscus (Pygmy chimpanzee).